Consider the following 503-residue polypeptide: Protein ERGIC-53-like (503 aa).

The N-terminal stretch at 1 to 25 is a signal peptide; that stretch reads MLKTGGLSPSLCLLSLLLALHSAER. Topologically, residues 26–439 are lumenal; it reads SYPPPQRRFE…WLPGFSTCLR (414 aa). The region spanning 32–253 is the L-type lectin-like domain; that stretch reads RRFEYKLSFK…DVLSFLTFSL (222 aa). An intrachain disulfide couples Cys177 to Cys216. A helical transmembrane segment spans residues 440 to 460; that stretch reads TSIFLFFLLIQTVGFFCYMNF. The Cytoplasmic portion of the chain corresponds to 461-503; that stretch reads RQELDKRLQEYLFTESISLQPALPIPRTIGVLRRQPVSPSMQA.

As to expression, predominantly expressed in the sublingual salivary gland, in the mucous cells of the acini, but not in the serous cells, nor in the duct system (at protein level). Not detected in the submandilar, nor the parotid glands. Expressed in the mucous glands, but not detected in the serous glands (at protein level). Besides the salivary glands, expressed in the Brunner's glands in the duodenum, but no other mucous or serous glands (at protein level).

It localises to the endoplasmic reticulum-Golgi intermediate compartment membrane. This is Protein ERGIC-53-like (Lman1l) from Rattus norvegicus (Rat).